Here is a 332-residue protein sequence, read N- to C-terminus: MVRVAINGFGRIGRLVMRIALQRKNVEVVALNDPFISNDYSAYMFKYDSTHGRYAGEVSHDDKHIIVDGHKIATFQERDPANLPWASLNIDIAIDSTGVFKELDTAQKHIDAGAKKVVITAPSSTAPMFVMGVNEEKYTSDLKIVSNASCTTNCLAPLAKVINDAFGIEEGLMTTVHSMTATQKTVDGPSHKDWRGGRTASGNIIPSSTGAAKAVGKVLPELQGKLTGMAFRVPTVDVSVVDLTVKLNKETTYDEIKKVVKAAAEGKLKGVLGYTEDAVVSSDFLGDSNSSIFDAAAGIQLSPKFVKLVSWYDNEYGYSTRVVDLVEHVAKA.

Residues Arg11, Ile12, and Asp33 each coordinate NAD(+). Glycyl lysine isopeptide (Lys-Gly) (interchain with G-Cter in ubiquitin) cross-links involve residues Lys46 and Lys63. Thr120 contacts NAD(+). Residues 149-151, Thr180, 209-210, and Arg232 each bind D-glyceraldehyde 3-phosphate; these read SCT and TG. Cys150 functions as the Nucleophile in the catalytic mechanism. Position 302 is a phosphoserine (Ser302). The NAD(+) site is built by Asn314 and Tyr318.

Belongs to the glyceraldehyde-3-phosphate dehydrogenase family. In terms of assembly, homotetramer.

Its subcellular location is the cytoplasm. The catalysed reaction is D-glyceraldehyde 3-phosphate + phosphate + NAD(+) = (2R)-3-phospho-glyceroyl phosphate + NADH + H(+). The enzyme catalyses NADH + H2O = (6R)-NADHX. It carries out the reaction NADH + H2O = (6S)-NADHX. It catalyses the reaction NADPH + H2O = (6R)-NADPHX. The catalysed reaction is NADPH + H2O = (6S)-NADPHX. The protein operates within carbohydrate degradation; glycolysis; pyruvate from D-glyceraldehyde 3-phosphate: step 1/5. Functionally, glyceraldehyde-3-phosphate dehydrogenase (GAPDH) involved in glycolysis and gluconeogenesis. Catalyzes the reaction of glyceraldehyde-3-phosphate to 1,3 bis-phosphoglycerate. The contribution of the TDH1, TDH2, and TDH3 to the total glyceraldehyde-3-phosphate dehydrogenase activity is 10-15, 25-30, and 50-60%, respectively. Its function is as follows. As a side activity, catalyzes the hydration of the nicotinamide ring of NADH or NADPH at the C6 position to give the corresponding hydrates, NADHX and NADPHX, which exist as R and S epimers, that cannot act as electron donors or acceptors and inhibit several dehydrogenases, making them toxic. This is Glyceraldehyde-3-phosphate dehydrogenase 2 from Saccharomyces cerevisiae (strain ATCC 204508 / S288c) (Baker's yeast).